A 462-amino-acid polypeptide reads, in one-letter code: Probable peptidoglycan glycosyltransferase FtsW (462 aa).

Residues 1-63 lie on the Cytoplasmic side of the membrane; it reads MGCIVCSDGI…VRDGRKFDAP (63 aa). Residues 64 to 84 traverse the membrane as a helical segment; it reads LLWMVVLMTAFGLLMIYSASV. Residues 85–97 lie on the Periplasmic side of the membrane; that stretch reads YLASKEGGDQFFY. Residues 98–118 traverse the membrane as a helical segment; the sequence is LTRQAGFVVAGLIASGFLWFL. Residues 119-125 lie on the Cytoplasmic side of the membrane; sequence CRMRTWR. The chain crosses the membrane as a helical span at residues 126–146; that stretch reads RLVPWIFALSGLLLVAVLIAG. Residues 147-160 lie on the Periplasmic side of the membrane; the sequence is REINGATRWIPLGP. The helical transmembrane segment at 161–181 threads the bilayer; it reads LNFQPTELFKLAVILYLASLF. The Cytoplasmic segment spans residues 182 to 227; that stretch reads TRREEVLRSMESLGWQSIWRGTANLIMSATNPQARRETLEMYGRFR. Helical transmembrane passes span 228 to 248 and 249 to 269; these read AIILPIMLVAFGLVLIMVQPD and FGSFVVITVITVGMLFLAGLP. At 270–271 the chain is on the cytoplasmic side; sequence WK. Residues 272–292 traverse the membrane as a helical segment; that stretch reads YFFVLVGSVLGGMVLMITAAP. The Periplasmic segment spans residues 293 to 348; it reads YRVQRVVAFLDPWKDPQGAGYQLTHSLMAIGRGEWFGMGLGASLSKRGFLPEAHTD. A helical membrane pass occupies residues 349 to 369; that stretch reads FIFAIIAEEFGFFGMCVLIFC. Residues 370 to 386 are Cytoplasmic-facing; that stretch reads YGWLVVRAFSIGKQSRD. The chain crosses the membrane as a helical span at residues 387 to 409; sequence LGLTFNAYIASGIGIWIGIQSFF. Residues 410-424 are Periplasmic-facing; the sequence is NIGVNIGALPTKGLT. The chain crosses the membrane as a helical span at residues 425–445; sequence LPLMSYGGSSVFFMLISMMLL. Over 446–462 the chain is Cytoplasmic; that stretch reads LRIDYENRRKMRGYRVE.

This sequence belongs to the SEDS family. FtsW subfamily.

It is found in the cell inner membrane. It carries out the reaction [GlcNAc-(1-&gt;4)-Mur2Ac(oyl-L-Ala-gamma-D-Glu-L-Lys-D-Ala-D-Ala)](n)-di-trans,octa-cis-undecaprenyl diphosphate + beta-D-GlcNAc-(1-&gt;4)-Mur2Ac(oyl-L-Ala-gamma-D-Glu-L-Lys-D-Ala-D-Ala)-di-trans,octa-cis-undecaprenyl diphosphate = [GlcNAc-(1-&gt;4)-Mur2Ac(oyl-L-Ala-gamma-D-Glu-L-Lys-D-Ala-D-Ala)](n+1)-di-trans,octa-cis-undecaprenyl diphosphate + di-trans,octa-cis-undecaprenyl diphosphate + H(+). The protein operates within cell wall biogenesis; peptidoglycan biosynthesis. Peptidoglycan polymerase that is essential for cell division. This is Probable peptidoglycan glycosyltransferase FtsW from Neisseria gonorrhoeae (strain NCCP11945).